The following is a 380-amino-acid chain: Cystathionine gamma-synthase (380 aa).

K195 is modified (N6-(pyridoxal phosphate)lysine).

The protein belongs to the trans-sulfuration enzymes family. Homotetramer. It depends on pyridoxal 5'-phosphate as a cofactor.

The protein localises to the cytoplasm. The enzyme catalyses O-succinyl-L-homoserine + L-cysteine = L,L-cystathionine + succinate + H(+). Functionally, catalyzes the formation of L-cystathionine from O-succinyl-L-homoserine (OSHS) and L-cysteine, via a gamma-replacement reaction. In the absence of thiol, catalyzes gamma-elimination to form 2-oxobutanoate, succinate and ammonia. This chain is Cystathionine gamma-synthase (metB), found in Helicobacter pylori (strain ATCC 700392 / 26695) (Campylobacter pylori).